The chain runs to 449 residues: Exodeoxyribonuclease 7 large subunit (449 aa).

It belongs to the XseA family. In terms of assembly, heterooligomer composed of large and small subunits.

The protein resides in the cytoplasm. It carries out the reaction Exonucleolytic cleavage in either 5'- to 3'- or 3'- to 5'-direction to yield nucleoside 5'-phosphates.. Functionally, bidirectionally degrades single-stranded DNA into large acid-insoluble oligonucleotides, which are then degraded further into small acid-soluble oligonucleotides. The chain is Exodeoxyribonuclease 7 large subunit from Latilactobacillus sakei subsp. sakei (strain 23K) (Lactobacillus sakei subsp. sakei).